Here is a 294-residue protein sequence, read N- to C-terminus: Urease accessory protein UreD 1 (294 aa).

The disordered stretch occupies residues 1–20 (MALSLDDLPEKPAPAEPVSA).

The protein belongs to the UreD family. UreD, UreF and UreG form a complex that acts as a GTP-hydrolysis-dependent molecular chaperone, activating the urease apoprotein by helping to assemble the nickel containing metallocenter of UreC. The UreE protein probably delivers the nickel.

The protein localises to the cytoplasm. Its function is as follows. Required for maturation of urease via the functional incorporation of the urease nickel metallocenter. The protein is Urease accessory protein UreD 1 of Methylorubrum populi (strain ATCC BAA-705 / NCIMB 13946 / BJ001) (Methylobacterium populi).